We begin with the raw amino-acid sequence, 116 residues long: Large ribosomal subunit protein uL14m (116 aa).

Belongs to the universal ribosomal protein uL14 family.

It localises to the mitochondrion. The protein is Large ribosomal subunit protein uL14m (RPL14) of Acanthamoeba polyphaga (Amoeba).